The sequence spans 652 residues: Acetyl-coenzyme A synthetase (652 aa).

Residues 191 to 194 (RAGR), threonine 311, and asparagine 335 contribute to the CoA site. ATP-binding positions include 387-389 (GEP), 411-416 (DTWWQT), aspartate 500, and arginine 515. Residue serine 523 participates in CoA binding. Arginine 526 contacts ATP. Residues valine 537, histidine 539, and isoleucine 542 each contribute to the Mg(2+) site. Arginine 584 is a CoA binding site. Lysine 609 is modified (N6-acetyllysine; by autocatalysis).

Belongs to the ATP-dependent AMP-binding enzyme family. As to quaternary structure, forms a 1:1 complex with CobB/NAD-dependent deacetylase. The cofactor is Mg(2+). Post-translationally, autoacetylated. Deacetylation by CobB activates the enzyme.

It catalyses the reaction acetate + ATP + CoA = acetyl-CoA + AMP + diphosphate. Catalyzes the conversion of acetate into acetyl-CoA (AcCoA), an essential intermediate at the junction of anabolic and catabolic pathways. Acs undergoes a two-step reaction. In the first half reaction, Acs combines acetate with ATP to form acetyl-adenylate (AcAMP) intermediate. In the second half reaction, it can then transfer the acetyl group from AcAMP to the sulfhydryl group of CoA, forming the product AcCoA. Its function is as follows. Enables the cell to use acetate during aerobic growth to generate energy via the TCA cycle, and biosynthetic compounds via the glyoxylate shunt. Acetylates CheY, the response regulator involved in flagellar movement and chemotaxis. The chain is Acetyl-coenzyme A synthetase from Escherichia coli (strain K12).